A 426-amino-acid polypeptide reads, in one-letter code: Serine--tRNA ligase (426 aa).

Threonine 233 to glutamate 235 contributes to the L-serine binding site. Position 264–266 (arginine 264–glutamate 266) interacts with ATP. Residue glutamate 287 coordinates L-serine. Glutamate 351 to serine 354 lines the ATP pocket. Serine 387 serves as a coordination point for L-serine.

Belongs to the class-II aminoacyl-tRNA synthetase family. Type-1 seryl-tRNA synthetase subfamily. In terms of assembly, homodimer. The tRNA molecule binds across the dimer.

Its subcellular location is the cytoplasm. It carries out the reaction tRNA(Ser) + L-serine + ATP = L-seryl-tRNA(Ser) + AMP + diphosphate + H(+). It catalyses the reaction tRNA(Sec) + L-serine + ATP = L-seryl-tRNA(Sec) + AMP + diphosphate + H(+). Its pathway is aminoacyl-tRNA biosynthesis; selenocysteinyl-tRNA(Sec) biosynthesis; L-seryl-tRNA(Sec) from L-serine and tRNA(Sec): step 1/1. Catalyzes the attachment of serine to tRNA(Ser). Is also able to aminoacylate tRNA(Sec) with serine, to form the misacylated tRNA L-seryl-tRNA(Sec), which will be further converted into selenocysteinyl-tRNA(Sec). The protein is Serine--tRNA ligase of Stenotrophomonas maltophilia (strain K279a).